A 1164-amino-acid chain; its full sequence is DNA-directed RNA polymerase 132 kDa polypeptide (1164 aa).

The protein belongs to the RNA polymerase beta chain family. The DNA-dependent RNA polymerase used for intermediate and late genes expression consists of eight subunits (147) kDa, (133) kDa, (35) kDa, (30) kDa, (22) kDa, (19) kDa, (18) kDa and (7) kDa totalling more than 500 kDa in mass. The same holoenzyme, with the addition of the transcription-specificity factor RAP94, is used for early gene expression.

Its subcellular location is the virion. It catalyses the reaction RNA(n) + a ribonucleoside 5'-triphosphate = RNA(n+1) + diphosphate. Its function is as follows. Part of the DNA-dependent RNA polymerase which catalyzes the transcription of viral DNA into RNA using the four ribonucleoside triphosphates as substrates. Responsible for the transcription of early, intermediate and late genes. DNA-dependent RNA polymerase associates with the early transcription factor (ETF), itself composed of D6 and A7, thereby allowing the early genes transcription. Late transcription, and probably also intermediate transcription, require newly synthesized RNA polymerase. In Cowpox virus (strain GRI-90 / Grishak) (CPV), this protein is DNA-directed RNA polymerase 132 kDa polypeptide (RPO132).